Consider the following 290-residue polypeptide: Virginiamycin B lyase (290 aa).

H226 is a substrate binding site. E265 is a Mg(2+) binding site. The active-site Proton acceptor is H267. Mg(2+) is bound at residue E282.

The protein belongs to the Vgb family. In terms of assembly, monomer. Requires Mg(2+) as cofactor.

Inactivates the type B streptogramin antibiotics by linearizing the lactone ring at the ester linkage, generating a free phenylglycine carboxylate and converting the threonyl moiety into 2-amino-butenoic acid. In Mycolicibacterium vanbaalenii (strain DSM 7251 / JCM 13017 / BCRC 16820 / KCTC 9966 / NRRL B-24157 / PYR-1) (Mycobacterium vanbaalenii), this protein is Virginiamycin B lyase.